The following is a 215-amino-acid chain: uncharacterized protein (215 aa).

To T.pallidum TP_0127, TP_0618 and TP_0619.

This is an uncharacterized protein from Treponema pallidum (strain Nichols).